The chain runs to 316 residues: Protoheme IX farnesyltransferase (316 aa).

9 consecutive transmembrane segments (helical) span residues Ile-28–Val-48, Pro-50–Leu-70, His-99–Val-119, Leu-122–Leu-142, Ile-150–Gly-170, Ile-178–Ile-198, Ile-223–Ala-243, Cys-244–Trp-264, and Ala-293–Phe-313.

This sequence belongs to the UbiA prenyltransferase family. Protoheme IX farnesyltransferase subfamily.

Its subcellular location is the cell inner membrane. It catalyses the reaction heme b + (2E,6E)-farnesyl diphosphate + H2O = Fe(II)-heme o + diphosphate. The protein operates within porphyrin-containing compound metabolism; heme O biosynthesis; heme O from protoheme: step 1/1. Functionally, converts heme B (protoheme IX) to heme O by substitution of the vinyl group on carbon 2 of heme B porphyrin ring with a hydroxyethyl farnesyl side group. The protein is Protoheme IX farnesyltransferase of Microcystis aeruginosa (strain NIES-843 / IAM M-2473).